The sequence spans 724 residues: Probable protein phosphatase 2C 62 (724 aa).

Positions D357 to N385 are disordered. Residues A365–A374 show a composition bias toward basic and acidic residues. The PPM-type phosphatase domain occupies D482–V719. Mn(2+) contacts are provided by D514, G515, D643, and D710.

This sequence belongs to the PP2C family. Requires Mg(2+) as cofactor. Mn(2+) is required as a cofactor.

The enzyme catalyses O-phospho-L-seryl-[protein] + H2O = L-seryl-[protein] + phosphate. The catalysed reaction is O-phospho-L-threonyl-[protein] + H2O = L-threonyl-[protein] + phosphate. The protein is Probable protein phosphatase 2C 62 of Arabidopsis thaliana (Mouse-ear cress).